Reading from the N-terminus, the 382-residue chain is Protein arginine N-methyltransferase 2 (382 aa).

ANK repeat units lie at residues 22 to 46 and 48 to 80; these read AAQTAAPSVLADLLAEGAPAWFQDD and LGWSCLHYAAERKEPECLEVLLQGGAVWNAVDK. The RMT2 domain maps to 134-382; the sequence is KTSAGDNLVF…RLPIAKMSLI (249 aa). S-adenosyl-L-methionine contacts are provided by residues phenylalanine 143, methionine 177, 205–210, 228–230, 255–256, and aspartate 284; these read FGLGIV, EAH, and WQ.

The protein belongs to the class I-like SAM-binding methyltransferase superfamily. RMT2 methyltransferase family. Monomer.

The protein resides in the cytoplasm. Its subcellular location is the nucleus. S-adenosyl-L-methionine-dependent protein-arginine N-methyltransferase that methylates the delta-nitrogen atom of arginine residues to form N5-methylarginine (type IV) in target proteins. Monomethylates ribosomal protein L12. This Cryptococcus neoformans var. neoformans serotype D (strain JEC21 / ATCC MYA-565) (Filobasidiella neoformans) protein is Protein arginine N-methyltransferase 2.